Consider the following 431-residue polypeptide: 5'-deoxyadenosine deaminase (431 aa).

Zn(2+)-binding residues include H65 and H67. 2 residues coordinate substrate: E94 and H185. H212 is a binding site for Zn(2+). Positions 215 and 300 each coordinate substrate. D300 provides a ligand contact to Zn(2+).

This sequence belongs to the metallo-dependent hydrolases superfamily. MTA/SAH deaminase family. Homotetramer. It depends on Zn(2+) as a cofactor.

It catalyses the reaction 5'-deoxyadenosine + H2O + H(+) = 5'-deoxyinosine + NH4(+). It carries out the reaction S-adenosyl-L-homocysteine + H2O + H(+) = S-inosyl-L-homocysteine + NH4(+). The enzyme catalyses S-methyl-5'-thioadenosine + H2O + H(+) = S-methyl-5'-thioinosine + NH4(+). The catalysed reaction is adenosine + H2O + H(+) = inosine + NH4(+). It functions in the pathway amino-acid biosynthesis; S-adenosyl-L-methionine biosynthesis. Its function is as follows. Catalyzes the deamination of three SAM-derived enzymatic products, namely 5'-deoxyadenosine, S-adenosyl-L-homocysteine, and 5'-methylthioadenosine, to produce the inosine analogs. Can also deaminate adenosine. The preferred substrate for this enzyme is 5'-deoxyadenosine, but all these substrates are efficiently deaminated. Likely functions in a S-adenosyl-L-methionine (SAM) recycling pathway from S-adenosyl-L-homocysteine (SAH) produced from SAM-dependent methylation reactions. May also be involved in the recycling of 5'-deoxyadenosine, whereupon the 5'-deoxyribose moiety of 5'-deoxyinosine is further metabolized to deoxyhexoses used for the biosynthesis of aromatic amino acids in methanogens. In Methanopyrus kandleri (strain AV19 / DSM 6324 / JCM 9639 / NBRC 100938), this protein is 5'-deoxyadenosine deaminase.